The following is a 223-amino-acid chain: 3,4-dihydroxy-2-butanone 4-phosphate synthase (223 aa).

Residues 39–40 (RE), aspartate 44, 152–156 (RRGHT), and glutamate 176 contribute to the D-ribulose 5-phosphate site. Glutamate 40 is a binding site for Mg(2+). A Mg(2+)-binding site is contributed by histidine 155.

Belongs to the DHBP synthase family. As to quaternary structure, homodimer. It depends on Mg(2+) as a cofactor. Mn(2+) is required as a cofactor.

The enzyme catalyses D-ribulose 5-phosphate = (2S)-2-hydroxy-3-oxobutyl phosphate + formate + H(+). It participates in cofactor biosynthesis; riboflavin biosynthesis; 2-hydroxy-3-oxobutyl phosphate from D-ribulose 5-phosphate: step 1/1. Its function is as follows. Catalyzes the conversion of D-ribulose 5-phosphate to formate and 3,4-dihydroxy-2-butanone 4-phosphate. The sequence is that of 3,4-dihydroxy-2-butanone 4-phosphate synthase from Desulfovibrio desulfuricans (strain ATCC 27774 / DSM 6949 / MB).